Reading from the N-terminus, the 1308-residue chain is Tau-tubulin kinase 1 (1308 aa).

Residues 34 to 297 (WKVLKKIGGG…LIMSVFENSM (264 aa)) enclose the Protein kinase domain. Residues 40–48 (IGGGGFGEI) and Lys-63 each bind ATP. Asp-154 acts as the Proton acceptor in catalysis. Disordered regions lie at residues 364 to 397 (LSDQ…GPEA), 418 to 448 (PCVE…PVRS), 474 to 671 (ERRS…APPF), 720 to 899 (QVPL…AGGG), 985 to 1085 (EMES…LARL), and 1097 to 1308 (RLAS…PGAR). Position 441 is a phosphoserine (Ser-441). Over residues 485 to 496 (PSRQACSSQPAQ) the composition is skewed to polar residues. Ser-541 carries the phosphoserine modification. 2 stretches are compositionally biased toward basic and acidic residues: residues 541-555 (SKEW…ELKD) and 574-589 (ELRP…RRLG). A compositionally biased stretch (low complexity) spans 638-647 (SPSHSPLHSG). The segment covering 735–769 (GEEEEEEEEEEEEEEEEEEEEEEEEEEEEEEEEEA) has biased composition (acidic residues). The span at 786–795 (GSERSTERSQ) shows a compositional bias: basic and acidic residues. 2 stretches are compositionally biased toward polar residues: residues 868-885 (PTGS…SSIL) and 1020-1035 (ASQQ…TISP). Residues 1097–1107 (RLASGASSSSS) show a composition bias toward low complexity.

It belongs to the protein kinase superfamily. CK1 Ser/Thr protein kinase family. Requires Mg(2+) as cofactor. It depends on Mn(2+) as a cofactor. Expressed in the brain. Strong expression in the cortical layers, the CA1 layers of the hippocampus and the granular layer of the cerebellum. Also expressed in the large cortical pyramidal cells in the temporal cortex, the CA1 pyramidal neurons and the cerebellum granular neurons.

The protein resides in the cytoplasm. The catalysed reaction is L-seryl-[protein] + ATP = O-phospho-L-seryl-[protein] + ADP + H(+). It carries out the reaction L-threonyl-[protein] + ATP = O-phospho-L-threonyl-[protein] + ADP + H(+). In terms of biological role, serine/threonine kinase which is able to phosphorylate TAU on serine, threonine and tyrosine residues. Induces aggregation of TAU. In Mus musculus (Mouse), this protein is Tau-tubulin kinase 1 (Ttbk1).